Reading from the N-terminus, the 211-residue chain is Large ribosomal subunit protein uL3 (211 aa).

Belongs to the universal ribosomal protein uL3 family. Part of the 50S ribosomal subunit. Forms a cluster with proteins L14 and L19.

In terms of biological role, one of the primary rRNA binding proteins, it binds directly near the 3'-end of the 23S rRNA, where it nucleates assembly of the 50S subunit. This is Large ribosomal subunit protein uL3 from Trichlorobacter lovleyi (strain ATCC BAA-1151 / DSM 17278 / SZ) (Geobacter lovleyi).